The sequence spans 497 residues: Signal recognition particle subunit SRP54 2 (497 aa).

Positions 1–297 (MVLAELGGRI…DAKPFVSRLL (297 aa)) are G-domain. GTP-binding positions include 108–117 (GLQGEVLEKP), 192–196 (DTSGR), and 250–253 (TKMD). Residues 298–497 (GNGDMSGFVN…LMGMFGGRDE (200 aa)) form an M-domain region.

It belongs to the GTP-binding SRP family. SRP54 subfamily. In terms of assembly, component of a signal recognition particle (SRP) complex that consists of a 7SL RNA molecule of 300 nucleotides and six protein subunits: SRP72, SRP68, SRP54, SRP19, SRP14 and SRP9.

The protein localises to the cytoplasm. Its subcellular location is the endoplasmic reticulum. The catalysed reaction is GTP + H2O = GDP + phosphate + H(+). Its function is as follows. Component of the signal recognition particle (SRP) complex, a ribonucleoprotein complex that mediates the cotranslational targeting of secretory and membrane proteins to the endoplasmic reticulum (ER). As part of the SRP complex, associates with the SRP receptor (SR) component SRPRA to target secretory proteins to the endoplasmic reticulum membrane. Binds to the signal sequence of presecretory proteins when they emerge from the ribosomes. Displays basal GTPase activity, and stimulates reciprocal GTPase activation of the SR subunit SRPRA. Forms a guanosine 5'-triphosphate (GTP)-dependent complex with the SR subunit SRPRA. SR compaction and GTPase mediated rearrangement of SR drive SRP-mediated cotranslational protein translocation into the ER. Requires the presence of SRP9/SRP14 and/or SRP19 to stably interact with RNA. This chain is Signal recognition particle subunit SRP54 2 (SRP-54B), found in Arabidopsis thaliana (Mouse-ear cress).